The following is a 421-amino-acid chain: D-amino acid dehydrogenase (421 aa).

FAD is bound at residue 3–17; sequence VLILGSGVIGVTSAY.

It belongs to the DadA oxidoreductase family. FAD serves as cofactor.

It carries out the reaction a D-alpha-amino acid + A + H2O = a 2-oxocarboxylate + AH2 + NH4(+). In terms of biological role, oxidative deamination of D-amino acids. The sequence is that of D-amino acid dehydrogenase from Bradyrhizobium diazoefficiens (strain JCM 10833 / BCRC 13528 / IAM 13628 / NBRC 14792 / USDA 110).